A 486-amino-acid polypeptide reads, in one-letter code: Glycogen synthase (486 aa).

K15 serves as a coordination point for ADP-alpha-D-glucose.

The protein belongs to the glycosyltransferase 1 family. Bacterial/plant glycogen synthase subfamily.

It carries out the reaction [(1-&gt;4)-alpha-D-glucosyl](n) + ADP-alpha-D-glucose = [(1-&gt;4)-alpha-D-glucosyl](n+1) + ADP + H(+). It functions in the pathway glycan biosynthesis; glycogen biosynthesis. Its function is as follows. Synthesizes alpha-1,4-glucan chains using ADP-glucose. The sequence is that of Glycogen synthase from Thermotoga petrophila (strain ATCC BAA-488 / DSM 13995 / JCM 10881 / RKU-1).